Reading from the N-terminus, the 362-residue chain is Probable dual-specificity RNA methyltransferase RlmN (362 aa).

The Proton acceptor role is filled by glutamate 105. In terms of domain architecture, Radical SAM core spans 111–344; sequence HEYGNSICVT…VTIRREQGHD (234 aa). An intrachain disulfide couples cysteine 118 to cysteine 349. [4Fe-4S] cluster contacts are provided by cysteine 125, cysteine 129, and cysteine 132. S-adenosyl-L-methionine contacts are provided by residues 175 to 176, serine 207, 230 to 232, and asparagine 306; these read GE and SLH. Cysteine 349 serves as the catalytic S-methylcysteine intermediate.

This sequence belongs to the radical SAM superfamily. RlmN family. [4Fe-4S] cluster is required as a cofactor.

It is found in the cytoplasm. The catalysed reaction is adenosine(2503) in 23S rRNA + 2 reduced [2Fe-2S]-[ferredoxin] + 2 S-adenosyl-L-methionine = 2-methyladenosine(2503) in 23S rRNA + 5'-deoxyadenosine + L-methionine + 2 oxidized [2Fe-2S]-[ferredoxin] + S-adenosyl-L-homocysteine. The enzyme catalyses adenosine(37) in tRNA + 2 reduced [2Fe-2S]-[ferredoxin] + 2 S-adenosyl-L-methionine = 2-methyladenosine(37) in tRNA + 5'-deoxyadenosine + L-methionine + 2 oxidized [2Fe-2S]-[ferredoxin] + S-adenosyl-L-homocysteine. Its function is as follows. Specifically methylates position 2 of adenine 2503 in 23S rRNA and position 2 of adenine 37 in tRNAs. The sequence is that of Probable dual-specificity RNA methyltransferase RlmN from Bacillus cereus (strain ATCC 14579 / DSM 31 / CCUG 7414 / JCM 2152 / NBRC 15305 / NCIMB 9373 / NCTC 2599 / NRRL B-3711).